The sequence spans 110 residues: DNA-directed RNA polymerase subunit omega (110 aa).

It belongs to the RNA polymerase subunit omega family. As to quaternary structure, the RNAP catalytic core consists of 2 alpha, 1 beta, 1 beta' and 1 omega subunit. When a sigma factor is associated with the core the holoenzyme is formed, which can initiate transcription.

The enzyme catalyses RNA(n) + a ribonucleoside 5'-triphosphate = RNA(n+1) + diphosphate. Its function is as follows. Promotes RNA polymerase assembly. Latches the N- and C-terminal regions of the beta' subunit thereby facilitating its interaction with the beta and alpha subunits. In Mycobacterium bovis (strain ATCC BAA-935 / AF2122/97), this protein is DNA-directed RNA polymerase subunit omega (rpoZ).